Reading from the N-terminus, the 288-residue chain is Structure-specific endonuclease subunit SLX1 (288 aa).

One can recognise a GIY-YIG domain in the interval 10–93; sequence DFYCSYLLRS…QHSYKTRFIE (84 aa). The SLX1-type zinc finger occupies 209 to 265; the sequence is CMICDKKIDYIHDEGTQMVGFCSDDECDFLSCLSCLYKEFTKNSKQIIPKSGHCPNC.

This sequence belongs to the SLX1 family. Forms a heterodimer with SLX4. It depends on a divalent metal cation as a cofactor.

It localises to the nucleus. Catalytic subunit of the SLX1-SLX4 structure-specific endonuclease that resolves DNA secondary structures generated during DNA repair and recombination. Has endonuclease activity towards branched DNA substrates, introducing single-strand cuts in duplex DNA close to junctions with ss-DNA. In Kluyveromyces lactis (strain ATCC 8585 / CBS 2359 / DSM 70799 / NBRC 1267 / NRRL Y-1140 / WM37) (Yeast), this protein is Structure-specific endonuclease subunit SLX1.